Consider the following 575-residue polypeptide: Dual specificity protein phosphatase YVH1 (575 aa).

The tract at residues Lys185–Lys213 is disordered. Residues Asn187–Asn208 show a composition bias toward low complexity. The Tyrosine-protein phosphatase domain occupies Asn283–Thr435. Residue Cys379 is the Phosphocysteine intermediate of the active site. 2 residues coordinate Zn(2+): Cys476 and Cys530.

It belongs to the protein-tyrosine phosphatase family. Non-receptor class dual specificity subfamily. As to quaternary structure, interacts with PES. It depends on Zn(2+) as a cofactor.

The protein resides in the cytoplasm. The protein localises to the nucleus. It carries out the reaction O-phospho-L-tyrosyl-[protein] + H2O = L-tyrosyl-[protein] + phosphate. The catalysed reaction is O-phospho-L-seryl-[protein] + H2O = L-seryl-[protein] + phosphate. In terms of biological role, dual specificity protein phosphatase which dephosphorylates both phosphotyrosine and phosphoserine residues. This Plasmodium falciparum (isolate 3D7) protein is Dual specificity protein phosphatase YVH1.